We begin with the raw amino-acid sequence, 38 residues long: Photosystem II reaction center protein L (38 aa).

A helical transmembrane segment spans residues 17–37 (SLYWGLLLIFVLAVLFSNYFF).

It belongs to the PsbL family. As to quaternary structure, PSII is composed of 1 copy each of membrane proteins PsbA, PsbB, PsbC, PsbD, PsbE, PsbF, PsbH, PsbI, PsbJ, PsbK, PsbL, PsbM, PsbT, PsbX, PsbY, PsbZ, Psb30/Ycf12, at least 3 peripheral proteins of the oxygen-evolving complex and a large number of cofactors. It forms dimeric complexes.

The protein localises to the plastid. It is found in the chloroplast thylakoid membrane. Its function is as follows. One of the components of the core complex of photosystem II (PSII). PSII is a light-driven water:plastoquinone oxidoreductase that uses light energy to abstract electrons from H(2)O, generating O(2) and a proton gradient subsequently used for ATP formation. It consists of a core antenna complex that captures photons, and an electron transfer chain that converts photonic excitation into a charge separation. This subunit is found at the monomer-monomer interface and is required for correct PSII assembly and/or dimerization. This Adiantum capillus-veneris (Maidenhair fern) protein is Photosystem II reaction center protein L.